Here is a 432-residue protein sequence, read N- to C-terminus: MAEWKEEVEVLVQRVVKDITGAFRRNPNIDEIGLIPCPEAKYNRSPIVLVENKLGVESWCIKFLLPYVHNKLLLYRQKKLWLNRDELIDVTCTLLLLNPDFTTAWNVRKELIQSGTLNPVKDLQLGKLALTKFPKSPETWIHRRWALQRLVQELVVAAVVDKDAICPETSERIQAIVEEEMHVCCEAAGRYPSNYNSWSHRIWVVQHLGNLKATLLIDELSSTKHWVSMHVSDHSGFHYRQFLLKSLLSKTLKDFDNVGAITDLIANEENLCLPRDGEANWNQICFDLPYLLEEEMDLNRELVDSFPGHETLWCHRRQIFNLIHQLLLEQSQSATPQSTSASIPDGSGNISQMSTTFQSYVTNPMDIDGMSDPNKQGYTQEIKRLKRAPVQDSLSFDSELRFINCVLTNCCSPEQSRFAASYRKWLLSLQGH.

PFTA repeat units lie at residues 86–119, 121–154, 179–212, 218–251, 294–327, and 395–432; these read ELID…TLNP, KDLQ…VQEL, EEMH…GNLK, DELS…LSKT, EEMD…HQLL, and SFDS…LQGH.

It belongs to the protein prenyltransferase subunit alpha family.

The polypeptide is Protein prenyltransferase alpha subunit repeat-containing protein 1-A (ptar1-a) (Xenopus laevis (African clawed frog)).